We begin with the raw amino-acid sequence, 72 residues long: Translation initiation factor IF-1 (72 aa).

The 72-residue stretch at 1-72 (MSKSDYIELE…TKGRIIFRHK (72 aa)) folds into the S1-like domain.

This sequence belongs to the IF-1 family. As to quaternary structure, component of the 30S ribosomal translation pre-initiation complex which assembles on the 30S ribosome in the order IF-2 and IF-3, IF-1 and N-formylmethionyl-tRNA(fMet); mRNA recruitment can occur at any time during PIC assembly.

Its subcellular location is the cytoplasm. Its function is as follows. One of the essential components for the initiation of protein synthesis. Stabilizes the binding of IF-2 and IF-3 on the 30S subunit to which N-formylmethionyl-tRNA(fMet) subsequently binds. Helps modulate mRNA selection, yielding the 30S pre-initiation complex (PIC). Upon addition of the 50S ribosomal subunit IF-1, IF-2 and IF-3 are released leaving the mature 70S translation initiation complex. The chain is Translation initiation factor IF-1 from Ruthia magnifica subsp. Calyptogena magnifica.